A 224-amino-acid polypeptide reads, in one-letter code: 7-cyano-7-deazaguanine synthase (224 aa).

Residue L10–V20 coordinates ATP. Zn(2+) contacts are provided by C189, C199, C202, and C205.

This sequence belongs to the QueC family. Zn(2+) is required as a cofactor.

It carries out the reaction 7-carboxy-7-deazaguanine + NH4(+) + ATP = 7-cyano-7-deazaguanine + ADP + phosphate + H2O + H(+). The protein operates within purine metabolism; 7-cyano-7-deazaguanine biosynthesis. In terms of biological role, catalyzes the ATP-dependent conversion of 7-carboxy-7-deazaguanine (CDG) to 7-cyano-7-deazaguanine (preQ(0)). This Pseudomonas fluorescens (strain SBW25) protein is 7-cyano-7-deazaguanine synthase.